Reading from the N-terminus, the 770-residue chain is Rho guanine nucleotide exchange factor 38 (770 aa).

Residues 33–88 form a disordered region; the sequence is KTDTVVDSSVSGDHSGSLRRSQSDRTEYNQKLQEKMTPQAECSSAETPTPEDEQQV. A Phosphothreonine modification is found at Thr-34. The span at 37–47 shows a compositional bias: low complexity; sequence VVDSSVSGDHS. Over residues 53–66 the composition is skewed to basic and acidic residues; that stretch reads SQSDRTEYNQKLQE. The DH domain maps to 94-285; that stretch reads KRAKIIRELI…KDINVNINEL (192 aa). Positions 327 to 542 constitute a BAR domain; the sequence is LKILTRGESQ…VHSLTFVKEN (216 aa). 2 consecutive SH3 domains span residues 581–644 and 706–769; these read GAEE…PHNP and VDEQ…KMTY.

Functionally, may act as a guanine-nucleotide releasing factor. The protein is Rho guanine nucleotide exchange factor 38 (Arhgef38) of Mus musculus (Mouse).